Consider the following 433-residue polypeptide: Amino-acid acetyltransferase (433 aa).

Residues Glu-287–Ser-426 enclose the N-acetyltransferase domain.

It belongs to the acetyltransferase family. ArgA subfamily.

The protein localises to the cytoplasm. The enzyme catalyses L-glutamate + acetyl-CoA = N-acetyl-L-glutamate + CoA + H(+). It functions in the pathway amino-acid biosynthesis; L-arginine biosynthesis; N(2)-acetyl-L-ornithine from L-glutamate: step 1/4. The protein is Amino-acid acetyltransferase of Pseudomonas fluorescens (strain SBW25).